The sequence spans 134 residues: Profilin-2 (134 aa).

The cysteines at positions 13 and 118 are disulfide-linked. The Involved in PIP2 interaction motif lies at 84–100 (AVIRGKKGSGGITIKKT). Position 114 is a phosphothreonine (threonine 114).

The protein belongs to the profilin family. As to quaternary structure, occurs in many kinds of cells as a complex with monomeric actin in a 1:1 ratio. Post-translationally, phosphorylated by MAP kinases.

The protein resides in the cytoplasm. It is found in the cytoskeleton. In terms of biological role, binds to actin and affects the structure of the cytoskeleton. At high concentrations, profilin prevents the polymerization of actin, whereas it enhances it at low concentrations. This Olea europaea (Common olive) protein is Profilin-2.